Reading from the N-terminus, the 90-residue chain is Small ribosomal subunit protein uS15 (90 aa).

The protein belongs to the universal ribosomal protein uS15 family. In terms of assembly, part of the 30S ribosomal subunit. Forms a bridge to the 50S subunit in the 70S ribosome, contacting the 23S rRNA.

In terms of biological role, one of the primary rRNA binding proteins, it binds directly to 16S rRNA where it helps nucleate assembly of the platform of the 30S subunit by binding and bridging several RNA helices of the 16S rRNA. Its function is as follows. Forms an intersubunit bridge (bridge B4) with the 23S rRNA of the 50S subunit in the ribosome. The protein is Small ribosomal subunit protein uS15 of Wolinella succinogenes (strain ATCC 29543 / DSM 1740 / CCUG 13145 / JCM 31913 / LMG 7466 / NCTC 11488 / FDC 602W) (Vibrio succinogenes).